A 75-amino-acid polypeptide reads, in one-letter code: Acylphosphatase-like protein MJ1405 (75 aa).

Residues 8–75 form the Acylphosphatase-like domain; sequence TYEIIIYGRI…TNFWRVRKCK (68 aa).

This chain is Acylphosphatase-like protein MJ1405, found in Methanocaldococcus jannaschii (strain ATCC 43067 / DSM 2661 / JAL-1 / JCM 10045 / NBRC 100440) (Methanococcus jannaschii).